Reading from the N-terminus, the 87-residue chain is Large ribosomal subunit protein bL27 (87 aa).

This sequence belongs to the bacterial ribosomal protein bL27 family.

This is Large ribosomal subunit protein bL27 from Paenarthrobacter aurescens (strain TC1).